The chain runs to 334 residues: Phospho-N-acetylmuramoyl-pentapeptide-transferase (334 aa).

10 helical membrane-spanning segments follow: residues 11 to 31, 55 to 75, 84 to 104, 124 to 144, 158 to 178, 184 to 204, 205 to 225, 233 to 253, 258 to 278, and 311 to 331; these read GAGL…IPLM, PTMG…IFAP, LIIA…DDYI, VGLA…GTAV, PLYY…VNFA, LLGG…ALAL, GQTD…GFLH, IFMG…LAVL, FLLV…ILQV, and LFWG…PGML.

It belongs to the glycosyltransferase 4 family. MraY subfamily. Requires Mg(2+) as cofactor.

The protein resides in the cell membrane. It catalyses the reaction UDP-N-acetyl-alpha-D-muramoyl-L-alanyl-gamma-D-glutamyl-meso-2,6-diaminopimeloyl-D-alanyl-D-alanine + di-trans,octa-cis-undecaprenyl phosphate = di-trans,octa-cis-undecaprenyl diphospho-N-acetyl-alpha-D-muramoyl-L-alanyl-D-glutamyl-meso-2,6-diaminopimeloyl-D-alanyl-D-alanine + UMP. It functions in the pathway cell wall biogenesis; peptidoglycan biosynthesis. Catalyzes the initial step of the lipid cycle reactions in the biosynthesis of the cell wall peptidoglycan: transfers peptidoglycan precursor phospho-MurNAc-pentapeptide from UDP-MurNAc-pentapeptide onto the lipid carrier undecaprenyl phosphate, yielding undecaprenyl-pyrophosphoryl-MurNAc-pentapeptide, known as lipid I. The polypeptide is Phospho-N-acetylmuramoyl-pentapeptide-transferase (Symbiobacterium thermophilum (strain DSM 24528 / JCM 14929 / IAM 14863 / T)).